Here is a 418-residue protein sequence, read N- to C-terminus: Gamma-glutamyl phosphate reductase (418 aa).

This sequence belongs to the gamma-glutamyl phosphate reductase family.

Its subcellular location is the cytoplasm. The catalysed reaction is L-glutamate 5-semialdehyde + phosphate + NADP(+) = L-glutamyl 5-phosphate + NADPH + H(+). Its pathway is amino-acid biosynthesis; L-proline biosynthesis; L-glutamate 5-semialdehyde from L-glutamate: step 2/2. Its function is as follows. Catalyzes the NADPH-dependent reduction of L-glutamate 5-phosphate into L-glutamate 5-semialdehyde and phosphate. The product spontaneously undergoes cyclization to form 1-pyrroline-5-carboxylate. The sequence is that of Gamma-glutamyl phosphate reductase from Marinobacter nauticus (strain ATCC 700491 / DSM 11845 / VT8) (Marinobacter aquaeolei).